Reading from the N-terminus, the 243-residue chain is DNA repair protein RecO (243 aa).

This sequence belongs to the RecO family.

Its function is as follows. Involved in DNA repair and RecF pathway recombination. In Bartonella quintana (strain Toulouse) (Rochalimaea quintana), this protein is DNA repair protein RecO.